The chain runs to 344 residues: tRNA N6-adenosine threonylcarbamoyltransferase (344 aa).

Fe cation is bound by residues His111 and His115. Substrate is bound by residues 134–138 (LVSGG), Asp167, Gly180, and Asn272. Asp300 contacts Fe cation.

Belongs to the KAE1 / TsaD family. Fe(2+) serves as cofactor.

The protein resides in the cytoplasm. The enzyme catalyses L-threonylcarbamoyladenylate + adenosine(37) in tRNA = N(6)-L-threonylcarbamoyladenosine(37) in tRNA + AMP + H(+). In terms of biological role, required for the formation of a threonylcarbamoyl group on adenosine at position 37 (t(6)A37) in tRNAs that read codons beginning with adenine. Is involved in the transfer of the threonylcarbamoyl moiety of threonylcarbamoyl-AMP (TC-AMP) to the N6 group of A37, together with TsaE and TsaB. TsaD likely plays a direct catalytic role in this reaction. This is tRNA N6-adenosine threonylcarbamoyltransferase from Idiomarina loihiensis (strain ATCC BAA-735 / DSM 15497 / L2-TR).